A 297-amino-acid chain; its full sequence is Non-homologous end-joining factor 1 (297 aa).

Residues 1 to 131 (MDARLLQLPW…ATVSTVCRHL (131 aa)) form a globular head region. A C-terminal tail region spans residues 220 to 286 (PKAPTHPKEE…LTHRPPAGAS (67 aa)). The segment at 222–297 (APTHPKEEDT…PKKKAKGLFM (76 aa)) is disordered. Positions 232 to 255 (GNSASHRPMAESSSISFEKTVPTQ) are enriched in polar residues. Residues 263 to 286 (VSEPSQVPQSSVSCLTHRPPAGAS) show a composition bias toward low complexity. An XLM motif is present at residues 287 to 297 (KPKKKAKGLFM). The span at 287-297 (KPKKKAKGLFM) shows a compositional bias: basic residues.

It belongs to the XRCC4-XLF family. XLF subfamily. In terms of assembly, homodimer. Interacts with xrcc4; the interaction is direct and is mediated via a head-to-head interaction between N-terminal head regions. Component of the core long-range non-homologous end joining (NHEJ) complex (also named DNA-PK complex) composed of prkdc/DNA-PKcs, lig4, xrcc4, xrcc6/Ku70, xrcc5/Ku80 and nhej1/xlf.

It localises to the nucleus. DNA repair protein involved in DNA non-homologous end joining (NHEJ); required for double-strand break (DSB) repair and V(D)J recombination. It is also involved in telomere maintenance. Plays a key role in NHEJ by promoting the ligation of various mismatched and non-cohesive ends. In some studies, has been shown to associate with xrcc4 to form alternating helical filaments that bridge DNA and act like a bandage, holding together the broken DNA until it is repaired. Alternatively, it has also been shown that rather than forming filaments, a single nhej1 dimer interacts through both head domains with xrcc4 to promote the close alignment of DNA ends. The xrcc4-nhej1/xlf subcomplex binds to the DNA fragments of a DSB in a highly diffusive manner and robustly bridges two independent DNA molecules, holding the broken DNA fragments in close proximity to one other. The mobility of the bridges ensures that the ends remain accessible for further processing by other repair factors. The chain is Non-homologous end-joining factor 1 from Xenopus laevis (African clawed frog).